Here is a 300-residue protein sequence, read N- to C-terminus: Ribosomal protein L11 methyltransferase (300 aa).

Positions 141, 164, 186, and 233 each coordinate S-adenosyl-L-methionine.

Belongs to the methyltransferase superfamily. PrmA family.

Its subcellular location is the cytoplasm. The catalysed reaction is L-lysyl-[protein] + 3 S-adenosyl-L-methionine = N(6),N(6),N(6)-trimethyl-L-lysyl-[protein] + 3 S-adenosyl-L-homocysteine + 3 H(+). Methylates ribosomal protein L11. The protein is Ribosomal protein L11 methyltransferase of Synechocystis sp. (strain ATCC 27184 / PCC 6803 / Kazusa).